The sequence spans 312 residues: Pyridoxal kinase (312 aa).

Residue Met-1 is modified to N-acetylmethionine. 2 residues coordinate pyridoxal: Ser-12 and Thr-47. Thr-47 lines the pyridoxal 5'-phosphate pocket. Phosphoserine is present on Ser-59. Asp-113 serves as a coordination point for ATP. Na(+) is bound at residue Asp-113. Asp-118 lines the Mg(2+) pocket. Residue Thr-148 participates in Na(+) binding. 150–153 (NQFE) provides a ligand contact to ATP. Position 164 is a phosphoserine (Ser-164). Thr-186 is a binding site for Na(+). Position 186-187 (186-187 (TS)) interacts with ATP. Ser-213 carries the post-translational modification Phosphoserine. Residues 226–228 (VEA) and Thr-233 contribute to the ATP site. 234-235 (GD) contacts pyridoxal 5'-phosphate. The active-site Proton acceptor is Asp-235. Ser-285 carries the phosphoserine modification.

This sequence belongs to the pyridoxine kinase family. As to quaternary structure, homodimer. Zn(2+) is required as a cofactor. Mg(2+) serves as cofactor.

The protein resides in the cytoplasm. It localises to the cytosol. It carries out the reaction pyridoxal + ATP = pyridoxal 5'-phosphate + ADP + H(+). The enzyme catalyses pyridoxamine + ATP = pyridoxamine 5'-phosphate + ADP + H(+). It catalyses the reaction pyridoxine + ATP = pyridoxine 5'-phosphate + ADP + H(+). Its pathway is cofactor metabolism; pyridoxal 5'-phosphate salvage; pyridoxal 5'-phosphate from pyridoxal: step 1/1. It functions in the pathway cofactor metabolism; pyridoxal 5'-phosphate salvage; pyridoxine 5'-phosphate from pyridoxine: step 1/1. The protein operates within cofactor metabolism; pyridoxal 5'-phosphate salvage; pyridoxamine 5'-phosphate from pyridoxamine: step 1/1. Activity is increased in the presence of K(+)or Na(+). Its function is as follows. Catalyzes the phosphorylation of the dietary vitamin B6 vitamers pyridoxal (PL), pyridoxine (PN) and pyridoxamine (PM) to form pyridoxal 5'-phosphate (PLP), pyridoxine 5'-phosphate (PNP) and pyridoxamine 5'-phosphate (PMP), respectively. PLP is the active form of vitamin B6, and acts as a cofactor for over 140 different enzymatic reactions. The chain is Pyridoxal kinase from Mus musculus (Mouse).